The primary structure comprises 98 residues: Small ribosomal subunit protein bS20 (98 aa).

This sequence belongs to the bacterial ribosomal protein bS20 family.

Functionally, binds directly to 16S ribosomal RNA. The polypeptide is Small ribosomal subunit protein bS20 (Parasynechococcus marenigrum (strain WH8102)).